Here is a 252-residue protein sequence, read N- to C-terminus: Probable transcriptional regulatory protein TW504 (252 aa).

Belongs to the TACO1 family.

It is found in the cytoplasm. This Tropheryma whipplei (strain TW08/27) (Whipple's bacillus) protein is Probable transcriptional regulatory protein TW504.